Here is a 241-residue protein sequence, read N- to C-terminus: ATP synthase subunit a (241 aa).

6 helical membrane-spanning segments follow: residues 19-39, 80-100, 106-126, 135-155, 177-197, and 203-223; these read AVLI…AKMA, LVAA…IPGF, NINV…YEGI, FAHF…IEIV, LFLW…AYLL, and LLQT…AVAI.

Belongs to the ATPase A chain family. F-type ATPases have 2 components, CF(1) - the catalytic core - and CF(0) - the membrane proton channel. CF(1) has five subunits: alpha(3), beta(3), gamma(1), delta(1), epsilon(1). CF(0) has three main subunits: a(1), b(2) and c(9-12). The alpha and beta chains form an alternating ring which encloses part of the gamma chain. CF(1) is attached to CF(0) by a central stalk formed by the gamma and epsilon chains, while a peripheral stalk is formed by the delta and b chains.

It is found in the cell inner membrane. Key component of the proton channel; it plays a direct role in the translocation of protons across the membrane. This Sulfurovum sp. (strain NBC37-1) protein is ATP synthase subunit a.